The following is a 378-amino-acid chain: 4-hydroxy-3-methylbut-2-en-1-yl diphosphate synthase (flavodoxin) (378 aa).

[4Fe-4S] cluster contacts are provided by cysteine 268, cysteine 271, cysteine 303, and glutamate 310.

It belongs to the IspG family. The cofactor is [4Fe-4S] cluster.

It catalyses the reaction (2E)-4-hydroxy-3-methylbut-2-enyl diphosphate + oxidized [flavodoxin] + H2O + 2 H(+) = 2-C-methyl-D-erythritol 2,4-cyclic diphosphate + reduced [flavodoxin]. It participates in isoprenoid biosynthesis; isopentenyl diphosphate biosynthesis via DXP pathway; isopentenyl diphosphate from 1-deoxy-D-xylulose 5-phosphate: step 5/6. Its function is as follows. Converts 2C-methyl-D-erythritol 2,4-cyclodiphosphate (ME-2,4cPP) into 1-hydroxy-2-methyl-2-(E)-butenyl 4-diphosphate. The protein is 4-hydroxy-3-methylbut-2-en-1-yl diphosphate synthase (flavodoxin) of Corynebacterium glutamicum (strain ATCC 13032 / DSM 20300 / JCM 1318 / BCRC 11384 / CCUG 27702 / LMG 3730 / NBRC 12168 / NCIMB 10025 / NRRL B-2784 / 534).